The sequence spans 298 residues: Ribosomal RNA small subunit methyltransferase H (298 aa).

S-adenosyl-L-methionine-binding positions include 35–37, Asp-55, Phe-82, Asp-100, and Gln-107; that span reads GGH.

Belongs to the methyltransferase superfamily. RsmH family.

It is found in the cytoplasm. It catalyses the reaction cytidine(1402) in 16S rRNA + S-adenosyl-L-methionine = N(4)-methylcytidine(1402) in 16S rRNA + S-adenosyl-L-homocysteine + H(+). Its function is as follows. Specifically methylates the N4 position of cytidine in position 1402 (C1402) of 16S rRNA. This chain is Ribosomal RNA small subunit methyltransferase H, found in Chlamydia abortus (strain DSM 27085 / S26/3) (Chlamydophila abortus).